Reading from the N-terminus, the 609-residue chain is MEGPSLRGPALRLAGLPTQQDCNIQEKIDLEIRMREGIWKLLSLSTQKDQVLHAVKNLMVCNARLMAYTSELQKLEEQIANQTGRCDVKFESKERTACKGKIAISDIRIPLMWKDSDHFSNKERSRRYAIFCLFKMGANVFDTDVVNVDKTITDICFENVTIFNEAGPDFQIKVEVYSCCTEESSITNTPKKLAKKLKTSISKATGKKISSVLQEEDDEMCLLLSSAVFGVKYNLLAHTTLTLESAEDSFKTHNLSINGNEESSFWLPLYGNMCCRLVAQPACMAEDAFAGFLNQQQMVEGLISWRRLYCVLRGGKLYCFYSPEEIEAKVEPALVVPINKETRIRAMDKDAKKRIHNFSVINPVPGQAITQIFAVDNREDLQKWMEAFWQHFFDLSQWKHCCEELMKIEIMSPRKPPLFLTKEATSVYHDMSIDSPMKLESLTDIIQKKIEETNGQFLIGQHEESLPPPWATLFDGNHQMVIQKKVLYPASEPLHDEKGKKRQAPLPPSDKLPFSLKSQSNTDQLVKDNWGKTSVSQTSSLDTKLSTLMHHLQKPMAAPRKLLPARRNRLSDGEHTDTKTNFEAKPVPAPRQKSIKDILDPRSWLQAQV.

The region spanning 5 to 81 is the REM-1 domain; that stretch reads SLRGPALRLA…LQKLEEQIAN (77 aa). Positions 56–91 form a coiled coil; it reads KNLMVCNARLMAYTSELQKLEEQIANQTGRCDVKFE. Residues 286-393 enclose the PH domain; sequence EDAFAGFLNQ…WMEAFWQHFF (108 aa). Disordered stretches follow at residues 495-520 and 554-609; these read HDEK…KSQS and KPMA…QAQV. Over residues 569 to 582 the composition is skewed to basic and acidic residues; sequence RLSDGEHTDTKTNF.

As to expression, expressed in lymphocytes, CD4 positive T-cells and bone marrow-derived cells. Also expressed in lung, colon, thymus and brain.

Functionally, may play an important role in lymphopoiesis. The sequence is that of Rhotekin-2 (RTKN2) from Homo sapiens (Human).